The following is a 398-amino-acid chain: Enoyl-[acyl-carrier-protein] reductase [NADH] (398 aa).

NAD(+) is bound by residues 48–53 (GASTGY), 74–75 (FE), 111–112 (DA), and 139–140 (LA). Tyrosine 225 serves as a coordination point for substrate. Residue tyrosine 235 is the Proton donor of the active site. Residues lysine 244 and 273 to 275 (VVT) contribute to the NAD(+) site.

Belongs to the TER reductase family. As to quaternary structure, monomer.

The catalysed reaction is a 2,3-saturated acyl-[ACP] + NAD(+) = a (2E)-enoyl-[ACP] + NADH + H(+). The protein operates within lipid metabolism; fatty acid biosynthesis. Functionally, involved in the final reduction of the elongation cycle of fatty acid synthesis (FAS II). Catalyzes the reduction of a carbon-carbon double bond in an enoyl moiety that is covalently linked to an acyl carrier protein (ACP). In Paraburkholderia xenovorans (strain LB400), this protein is Enoyl-[acyl-carrier-protein] reductase [NADH].